The chain runs to 338 residues: Fusarubin cluster-specific transcription factor fsr6 (338 aa).

Residues 16–44 (CDACTTAKVRCSRTHPCERCEDNGQAKEC) constitute a DNA-binding region (zn(2)-C6 fungal-type).

Its subcellular location is the nucleus. In terms of biological role, transcription factor that regulates the expression of the gene cluster that mediates the biosynthesis of fusarubins, highly pigmented naphthoquinones responsible for the coloration of the fruiting bodies. The protein is Fusarubin cluster-specific transcription factor fsr6 of Gibberella fujikuroi (strain CBS 195.34 / IMI 58289 / NRRL A-6831) (Bakanae and foot rot disease fungus).